We begin with the raw amino-acid sequence, 473 residues long: Photosystem II CP43 reaction center protein (473 aa).

Positions 1–14 are excised as a propeptide; the sequence is MKTLYSLRRFYPVE. The residue at position 15 (Thr-15) is an N-acetylthreonine. Residue Thr-15 is modified to Phosphothreonine. The next 5 membrane-spanning stretches (helical) occupy residues 69 to 93, 134 to 155, 178 to 200, 255 to 275, and 291 to 312; these read LFEV…PHLA, LLGP…KDRN, KALY…RKIT, KPFA…LSYS, and WFNN…ASQA. Position 367 (Glu-367) interacts with [CaMn4O5] cluster. The chain crosses the membrane as a helical span at residues 447–471; sequence RARAAAAGFEKGIDRDFEPVLSMTP.

Belongs to the PsbB/PsbC family. PsbC subfamily. In terms of assembly, PSII is composed of 1 copy each of membrane proteins PsbA, PsbB, PsbC, PsbD, PsbE, PsbF, PsbH, PsbI, PsbJ, PsbK, PsbL, PsbM, PsbT, PsbX, PsbY, PsbZ, Psb30/Ycf12, at least 3 peripheral proteins of the oxygen-evolving complex and a large number of cofactors. It forms dimeric complexes. Requires Binds multiple chlorophylls and provides some of the ligands for the Ca-4Mn-5O cluster of the oxygen-evolving complex. It may also provide a ligand for a Cl- that is required for oxygen evolution. PSII binds additional chlorophylls, carotenoids and specific lipids. as cofactor.

The protein localises to the plastid. It is found in the chloroplast thylakoid membrane. One of the components of the core complex of photosystem II (PSII). It binds chlorophyll and helps catalyze the primary light-induced photochemical processes of PSII. PSII is a light-driven water:plastoquinone oxidoreductase, using light energy to abstract electrons from H(2)O, generating O(2) and a proton gradient subsequently used for ATP formation. The chain is Photosystem II CP43 reaction center protein from Morus indica (Mulberry).